The sequence spans 344 residues: Arginine N-succinyltransferase (344 aa).

Leu125 provides a ligand contact to succinyl-CoA. The Proton donor role is filled by His229.

Belongs to the arginine N-succinyltransferase family.

The enzyme catalyses succinyl-CoA + L-arginine = N(2)-succinyl-L-arginine + CoA + H(+). Its pathway is amino-acid degradation; L-arginine degradation via AST pathway; L-glutamate and succinate from L-arginine: step 1/5. Catalyzes the transfer of succinyl-CoA to arginine to produce N(2)-succinylarginine. This chain is Arginine N-succinyltransferase, found in Shigella boydii serotype 18 (strain CDC 3083-94 / BS512).